Here is an 823-residue protein sequence, read N- to C-terminus: High affinity cAMP-specific and IBMX-insensitive 3',5'-cyclic phosphodiesterase 8A (823 aa).

A disordered region spans residues 1-55 (MGCAPSIHTSENRTFSHSDGEDEDVDVDVPGPAPRSIQRWSTAPGLVEPQPRDNG). The span at 10–19 (SENRTFSHSD) shows a compositional bias: basic and acidic residues. A PAS domain is found at 209–280 (ACNSVFTALE…AINSCVTVDK (72 aa)). The region spanning 283–325 (QGVYHTQKKNGDNIQQNVKIIPVIGQGGKIRHYVSIIRVCNGN) is the PAC domain. A disordered region spans residues 338 to 373 (DSQTDNQAGKHKDRRKHSMDAKAVSSRTSDVSSQRR). Ser355 carries the post-translational modification Phosphoserine; by PKA. Phosphoserine occurs at positions 382 and 452. Tyr456 is modified (phosphotyrosine). In terms of domain architecture, PDEase spans 475 to 814 (SLHDVPPRIA…RYWKGLDEKK (340 aa)). The active-site Proton donor is the His551. 4 residues coordinate a divalent metal cation: His555, His591, Asp592, and Asp720.

This sequence belongs to the cyclic nucleotide phosphodiesterase family. PDE8 subfamily. In terms of assembly, interacts with RAF1. The interaction promotes RAF1 activity. Requires a divalent metal cation as cofactor. Post-translationally, phosphorylated at Ser-355 by PKA under elevated cAMP conditions, this enhances catalytic activity. In terms of tissue distribution, expressed in multiple tissues, with highest levels in testis, followed by liver, heart, skeletal muscle, and kidney. In the testis, expressed specifically in the seminiferous tubules, in postmitotic pachytene spermatocytes. Low expression, if any, in lung, smooth muscle, pancreas, thyroid, thymus, submaxillary gland, spleen, prostate, epididymus, uterus.

The catalysed reaction is 3',5'-cyclic AMP + H2O = AMP + H(+). It functions in the pathway purine metabolism; 3',5'-cyclic AMP degradation; AMP from 3',5'-cyclic AMP: step 1/1. Inhibited by dipyridimole. Insensitive to selective PDE inhibitor rolipram and to the non-selective inhibitor, IBMX. In terms of biological role, hydrolyzes the second messenger cAMP, which is a key regulator of many important physiological processes. May be involved in maintaining basal levels of the cyclic nucleotide and/or in the cAMP regulation of germ cell development. Binding to RAF1 reduces RAF1 'Ser-259' inhibitory-phosphorylation and stimulates RAF1-dependent EGF-activated ERK-signaling. Protects against cell death induced by hydrogen peroxide and staurosporine. This is High affinity cAMP-specific and IBMX-insensitive 3',5'-cyclic phosphodiesterase 8A (Pde8a) from Mus musculus (Mouse).